The chain runs to 92 residues: Large ribosomal subunit protein uL23c (92 aa).

Belongs to the universal ribosomal protein uL23 family. Part of the 50S ribosomal subunit.

It is found in the plastid. The protein resides in the chloroplast. Functionally, binds to 23S rRNA. The polypeptide is Large ribosomal subunit protein uL23c (rpl23) (Chara vulgaris (Common stonewort)).